The primary structure comprises 267 residues: Indole-3-glycerol phosphate synthase (267 aa).

It belongs to the TrpC family.

The enzyme catalyses 1-(2-carboxyphenylamino)-1-deoxy-D-ribulose 5-phosphate + H(+) = (1S,2R)-1-C-(indol-3-yl)glycerol 3-phosphate + CO2 + H2O. The protein operates within amino-acid biosynthesis; L-tryptophan biosynthesis; L-tryptophan from chorismate: step 4/5. The chain is Indole-3-glycerol phosphate synthase from Polynucleobacter necessarius subsp. necessarius (strain STIR1).